The primary structure comprises 239 residues: Probable transcriptional regulatory protein Sca_0317 (239 aa).

It belongs to the TACO1 family. YeeN subfamily.

It localises to the cytoplasm. The protein is Probable transcriptional regulatory protein Sca_0317 of Staphylococcus carnosus (strain TM300).